We begin with the raw amino-acid sequence, 427 residues long: UPF0229 protein YeaH (427 aa).

The span at 79-90 (NDHFVQNDRIER) shows a compositional bias: basic and acidic residues. The interval 79–110 (NDHFVQNDRIERPQGGGGGSGSGQGQASQDGE) is disordered. Over residues 92–102 (QGGGGGSGSGQ) the composition is skewed to gly residues.

Belongs to the UPF0229 family.

This is UPF0229 protein YeaH from Escherichia coli O9:H4 (strain HS).